The primary structure comprises 412 residues: Glucose-1-phosphate adenylyltransferase (412 aa).

Alpha-D-glucose 1-phosphate contacts are provided by residues Tyr-98, Gly-163, 178-179, and Ser-189; that span reads EK.

Belongs to the bacterial/plant glucose-1-phosphate adenylyltransferase family. In terms of assembly, homotetramer.

The enzyme catalyses alpha-D-glucose 1-phosphate + ATP + H(+) = ADP-alpha-D-glucose + diphosphate. The protein operates within glycan biosynthesis; glycogen biosynthesis. Involved in the biosynthesis of ADP-glucose, a building block required for the elongation reactions to produce glycogen. Catalyzes the reaction between ATP and alpha-D-glucose 1-phosphate (G1P) to produce pyrophosphate and ADP-Glc. This chain is Glucose-1-phosphate adenylyltransferase, found in Thermosipho africanus (strain TCF52B).